The following is a 237-amino-acid chain: tRNA1(Val) (adenine(37)-N6)-methyltransferase (237 aa).

The protein belongs to the methyltransferase superfamily. tRNA (adenine-N(6)-)-methyltransferase family.

It localises to the cytoplasm. The catalysed reaction is adenosine(37) in tRNA1(Val) + S-adenosyl-L-methionine = N(6)-methyladenosine(37) in tRNA1(Val) + S-adenosyl-L-homocysteine + H(+). In terms of biological role, specifically methylates the adenine in position 37 of tRNA(1)(Val) (anticodon cmo5UAC). The sequence is that of tRNA1(Val) (adenine(37)-N6)-methyltransferase from Bacteroides thetaiotaomicron (strain ATCC 29148 / DSM 2079 / JCM 5827 / CCUG 10774 / NCTC 10582 / VPI-5482 / E50).